Consider the following 225-residue polypeptide: MKHVLKNDWGPLLAPEFEKEYYRELDVFLKEEYSTHVVYPKIEDIFNALEYTSYENTKVVILGQDPYHGPNQAHGLSFSVQPGVKTPPSLLNMYKELRDEYGYDIPNNGYLVKWAEQGVLLLNTVLTVRQGEANSHKGKGWEHFTDRVIELLNEREKPVIFILWGRHAQAKKKLITNPNHQIIESVHPSPLSARRGFFGSKPYSKVNTILANMGEGEIDWEIPNL.

Catalysis depends on Asp-65, which acts as the Proton acceptor.

The protein belongs to the uracil-DNA glycosylase (UDG) superfamily. UNG family.

The protein localises to the cytoplasm. It catalyses the reaction Hydrolyzes single-stranded DNA or mismatched double-stranded DNA and polynucleotides, releasing free uracil.. Functionally, excises uracil residues from the DNA which can arise as a result of misincorporation of dUMP residues by DNA polymerase or due to deamination of cytosine. The chain is Uracil-DNA glycosylase from Bacillus anthracis (strain A0248).